The following is a 436-amino-acid chain: Chromosomal replication initiator protein DnaA (436 aa).

The tract at residues 1–69 (MLADEVIELL…ANIFEVKTGI (69 aa)) is domain I, interacts with DnaA modulators. Positions 69 to 99 (IKPVISITTQKNRVSIKAKDIDVKQIRTQSS) are domain II. Residues 100 to 314 (LLNPSYTFES…SAIININAFA (215 aa)) are domain III, AAA+ region. Residues G144, G146, K147, and T148 each contribute to the ATP site. The interval 315–436 (NIMRQEITLE…ELKNKITSKE (122 aa)) is domain IV, binds dsDNA.

The protein belongs to the DnaA family. As to quaternary structure, oligomerizes as a right-handed, spiral filament on DNA at oriC.

Its subcellular location is the cytoplasm. Its function is as follows. Plays an essential role in the initiation and regulation of chromosomal replication. ATP-DnaA binds to the origin of replication (oriC) to initiate formation of the DNA replication initiation complex once per cell cycle. Binds the DnaA box (a 9 base pair repeat at the origin) and separates the double-stranded (ds)DNA. Forms a right-handed helical filament on oriC DNA; dsDNA binds to the exterior of the filament while single-stranded (ss)DNA is stabiized in the filament's interior. The ATP-DnaA-oriC complex binds and stabilizes one strand of the AT-rich DNA unwinding element (DUE), permitting loading of DNA polymerase. After initiation quickly degrades to an ADP-DnaA complex that is not apt for DNA replication. Binds acidic phospholipids. This chain is Chromosomal replication initiator protein DnaA, found in Campylobacter fetus subsp. fetus (strain 82-40).